A 63-amino-acid polypeptide reads, in one-letter code: Large ribosomal subunit protein uL29 (63 aa).

This sequence belongs to the universal ribosomal protein uL29 family.

This Pseudoalteromonas translucida (strain TAC 125) protein is Large ribosomal subunit protein uL29.